The chain runs to 339 residues: Tetraacyldisaccharide 4'-kinase (339 aa).

62–69 (VAGGTGKT) contributes to the ATP binding site.

It belongs to the LpxK family.

It carries out the reaction a lipid A disaccharide + ATP = a lipid IVA + ADP + H(+). It participates in glycolipid biosynthesis; lipid IV(A) biosynthesis; lipid IV(A) from (3R)-3-hydroxytetradecanoyl-[acyl-carrier-protein] and UDP-N-acetyl-alpha-D-glucosamine: step 6/6. Its function is as follows. Transfers the gamma-phosphate of ATP to the 4'-position of a tetraacyldisaccharide 1-phosphate intermediate (termed DS-1-P) to form tetraacyldisaccharide 1,4'-bis-phosphate (lipid IVA). In Xylella fastidiosa (strain 9a5c), this protein is Tetraacyldisaccharide 4'-kinase.